We begin with the raw amino-acid sequence, 482 residues long: 2-succinylbenzoate--CoA ligase (482 aa).

It belongs to the ATP-dependent AMP-binding enzyme family. MenE subfamily.

The enzyme catalyses 2-succinylbenzoate + ATP + CoA = 2-succinylbenzoyl-CoA + AMP + diphosphate. It participates in quinol/quinone metabolism; 1,4-dihydroxy-2-naphthoate biosynthesis; 1,4-dihydroxy-2-naphthoate from chorismate: step 5/7. Its pathway is quinol/quinone metabolism; menaquinone biosynthesis. Its function is as follows. Converts 2-succinylbenzoate (OSB) to 2-succinylbenzoyl-CoA (OSB-CoA). This chain is 2-succinylbenzoate--CoA ligase, found in Bacillus anthracis (strain A0248).